The sequence spans 329 residues: Malate dehydrogenase (329 aa).

Residue 12-18 coordinates NAD(+); sequence GAAGQIG. Positions 95 and 101 each coordinate substrate. Residues N108, Q115, and 132–134 each bind NAD(+); that span reads VGN. Substrate contacts are provided by N134 and R165. Residue H190 is the Proton acceptor of the active site.

Belongs to the LDH/MDH superfamily. MDH type 2 family.

The enzyme catalyses (S)-malate + NAD(+) = oxaloacetate + NADH + H(+). Catalyzes the reversible oxidation of malate to oxaloacetate. This is Malate dehydrogenase from Bordetella avium (strain 197N).